We begin with the raw amino-acid sequence, 706 residues long: Elongation factor G (706 aa).

The tr-type G domain occupies Leu15–Val291. GTP contacts are provided by residues Ala24–Thr31, Asp91–His95, and Asn145–Asp148.

This sequence belongs to the TRAFAC class translation factor GTPase superfamily. Classic translation factor GTPase family. EF-G/EF-2 subfamily.

The protein resides in the cytoplasm. In terms of biological role, catalyzes the GTP-dependent ribosomal translocation step during translation elongation. During this step, the ribosome changes from the pre-translocational (PRE) to the post-translocational (POST) state as the newly formed A-site-bound peptidyl-tRNA and P-site-bound deacylated tRNA move to the P and E sites, respectively. Catalyzes the coordinated movement of the two tRNA molecules, the mRNA and conformational changes in the ribosome. The protein is Elongation factor G of Leptospira interrogans serogroup Icterohaemorrhagiae serovar copenhageni (strain Fiocruz L1-130).